The sequence spans 32 residues: Cytochrome b6-f complex subunit 6 (32 aa).

Residues 4-26 (ITSYVGLLFTALGFTLGLYFGLT) form a helical membrane-spanning segment.

The protein belongs to the PetL family. The 4 large subunits of the cytochrome b6-f complex are cytochrome b6, subunit IV (17 kDa polypeptide, PetD), cytochrome f and the Rieske protein, while the 4 small subunits are PetG, PetL, PetM and PetN. The complex functions as a dimer.

The protein localises to the plastid. It is found in the chloroplast thylakoid membrane. Its function is as follows. Component of the cytochrome b6-f complex, which mediates electron transfer between photosystem II (PSII) and photosystem I (PSI), cyclic electron flow around PSI, and state transitions. PetL is important for photoautotrophic growth as well as for electron transfer efficiency and stability of the cytochrome b6-f complex. This Tetradesmus obliquus (Green alga) protein is Cytochrome b6-f complex subunit 6.